Consider the following 665-residue polypeptide: Intraflagellar transport protein 70A (665 aa).

TPR repeat units lie at residues 11–44 (DGEF…SPRS), 45–78 (RAGL…HPEL), 154–187 (TDGQ…SGYQ), 189–221 (DLSY…GIRQ), 393–424 (LTKQ…EKYI), 425–457 (PVLM…CNDH), and 459–492 (VWKL…HYDN). Residues 508 to 535 (YIMTSQNEEAEELMRKIEKEEEQLSYDD) adopt a coiled-coil conformation. Residues 544–577 (CIVNLVIGTLYCAKGNYEFGISRVIKSLEPYNKK) form a TPR 8 repeat.

It belongs to the TTC30/dfy-1/fleer family.

The protein localises to the cell projection. The protein resides in the cilium. Its function is as follows. Required for polyglutamylation of axonemal tubulin. Plays a role in anterograde intraflagellar transport (IFT), the process by which cilia precursors are transported from the base of the cilium to the site of their incorporation at the tip. The sequence is that of Intraflagellar transport protein 70A from Homo sapiens (Human).